Here is a 308-residue protein sequence, read N- to C-terminus: Aspartate carbamoyltransferase catalytic subunit (308 aa).

Residues Arg51 and Thr52 each contribute to the carbamoyl phosphate site. Lys80 provides a ligand contact to L-aspartate. Positions 101, 129, and 132 each coordinate carbamoyl phosphate. Arg162 and Arg224 together coordinate L-aspartate. Carbamoyl phosphate contacts are provided by Leu263 and Pro264.

Belongs to the aspartate/ornithine carbamoyltransferase superfamily. ATCase family. Heterododecamer (2C3:3R2) of six catalytic PyrB chains organized as two trimers (C3), and six regulatory PyrI chains organized as three dimers (R2).

It carries out the reaction carbamoyl phosphate + L-aspartate = N-carbamoyl-L-aspartate + phosphate + H(+). It participates in pyrimidine metabolism; UMP biosynthesis via de novo pathway; (S)-dihydroorotate from bicarbonate: step 2/3. Catalyzes the condensation of carbamoyl phosphate and aspartate to form carbamoyl aspartate and inorganic phosphate, the committed step in the de novo pyrimidine nucleotide biosynthesis pathway. This is Aspartate carbamoyltransferase catalytic subunit from Bacteroides fragilis (strain ATCC 25285 / DSM 2151 / CCUG 4856 / JCM 11019 / LMG 10263 / NCTC 9343 / Onslow / VPI 2553 / EN-2).